The primary structure comprises 169 residues: UPF0316 protein Dde_2502 (169 aa).

3 helical membrane-spanning segments follow: residues 1–21 (MITA…LCDV), 38–58 (LAFS…SRVI), and 68–88 (LAFA…EGVF).

Belongs to the UPF0316 family.

Its subcellular location is the cell membrane. In Oleidesulfovibrio alaskensis (strain ATCC BAA-1058 / DSM 17464 / G20) (Desulfovibrio alaskensis), this protein is UPF0316 protein Dde_2502.